The following is a 446-amino-acid chain: 3-phosphoshikimate 1-carboxyvinyltransferase (446 aa).

Residues K35, S36, and R40 each contribute to the 3-phosphoshikimate site. K35 lines the phosphoenolpyruvate pocket. Residues G108 and R137 each coordinate phosphoenolpyruvate. 3-phosphoshikimate is bound by residues S182, Q184, D332, and K359. Phosphoenolpyruvate is bound at residue Q184. The Proton acceptor role is filled by D332. The phosphoenolpyruvate site is built by R363 and R405.

The protein belongs to the EPSP synthase family. Monomer.

It is found in the cytoplasm. It carries out the reaction 3-phosphoshikimate + phosphoenolpyruvate = 5-O-(1-carboxyvinyl)-3-phosphoshikimate + phosphate. Its pathway is metabolic intermediate biosynthesis; chorismate biosynthesis; chorismate from D-erythrose 4-phosphate and phosphoenolpyruvate: step 6/7. Catalyzes the transfer of the enolpyruvyl moiety of phosphoenolpyruvate (PEP) to the 5-hydroxyl of shikimate-3-phosphate (S3P) to produce enolpyruvyl shikimate-3-phosphate and inorganic phosphate. This chain is 3-phosphoshikimate 1-carboxyvinyltransferase, found in Acaryochloris marina (strain MBIC 11017).